A 205-amino-acid polypeptide reads, in one-letter code: Protein TGAM_1450 (205 aa).

The AMMECR1 domain occupies 7–201; that stretch reads EWGEFLVRLA…EEYPRGPVRR (195 aa).

The polypeptide is Protein TGAM_1450 (Thermococcus gammatolerans (strain DSM 15229 / JCM 11827 / EJ3)).